A 314-amino-acid polypeptide reads, in one-letter code: Protein YIF1B (314 aa).

Met1 is modified (N-acetylmethionine). Low complexity predominate over residues 1–12 (MHPAGLAAAAAG). Residues 1-55 (MHPAGLAAAAAGTPRLRKWPSKRRIPVSQPGMADPHQLFDDTSSAQSRGYGAQRA) form a disordered region. Residues 1 to 156 (MHPAGLAAAA…APRFDVNAPD (156 aa)) lie on the Cytoplasmic side of the membrane. Thr13 carries the post-translational modification Phosphothreonine. Residues 15–25 (RLRKWPSKRRI) show a composition bias toward basic residues. At Ser65 the chain carries Phosphoserine. Residues 157-177 (LYIPAMAFITYVLVAGLALGT) traverse the membrane as a helical segment. Topologically, residues 178 to 192 (QDRFSPDLLGLQASS) are extracellular. Residues 193–213 (ALAWLTLEVLAILLSLYLVTV) traverse the membrane as a helical segment. The Cytoplasmic portion of the chain corresponds to 214–219 (NTDLTT). The chain crosses the membrane as a helical span at residues 220 to 240 (IDLVAFLGYKYVGMIGGVLMG). A topological domain (extracellular) is located at residue Leu241. The chain crosses the membrane as a helical span at residues 242–262 (LFGKIGYYLVLGWCCVAIFVF). The Cytoplasmic portion of the chain corresponds to 263-292 (MIRTLRLKILADAAAEGVPVRGARNQLRMY). A helical membrane pass occupies residues 293–313 (LTMAVAAAQPMLMYWLTFHLV). Arg314 is a topological domain (extracellular).

This sequence belongs to the YIF1 family. As to quaternary structure, interacts with HTR1A (via C-terminus). Interacts with ABCB9 (via TMD0); this interaction allows (but is not essential) the ER-to-Golgi trafficking and strongly depends on a salt bridge within TMD0.

It is found in the endoplasmic reticulum membrane. The protein localises to the golgi apparatus membrane. Its subcellular location is the endoplasmic reticulum-Golgi intermediate compartment membrane. In terms of biological role, functions in endoplasmic reticulum to Golgi vesicle-mediated transport and regulates the proper organization of the endoplasmic reticulum and the Golgi. Plays a key role in targeting to neuronal dendrites receptors such as HTR1A. Plays also a role in primary cilium and sperm flagellum assembly probably through protein transport to these compartments. The protein is Protein YIF1B of Homo sapiens (Human).